Here is a 686-residue protein sequence, read N- to C-terminus: Leucine-rich repeat-containing protein 49 (686 aa).

LRR repeat units lie at residues 113-134 (HLRL…SNLQ), 135-156 (KLIS…STLR), 157-178 (CLRV…ENLK), 179-200 (SLDV…NHLC), 201-222 (ELRV…NGLD), 223-244 (SLTE…DNLP), and 245-266 (CLQH…SCLA). Residues 279–317 (NPIAQESWYKHTVLQNMMQLRQLDMKRITEEERRMASVL) enclose the LRRCT domain. The stretch at 303–341 (MKRITEEERRMASVLAKKEEEKKRESHKQSLLKEKKRLT) forms a coiled coil. Residues 360-388 (ATNEDRKDSDSPQDPCQIDGSTLSAFPEE) form a disordered region.

As to quaternary structure, part of the neuronal tubulin polyglutamylase complex which contains TPGS1, TPGS2, TTLL1, LRRC49 and NICN1. Interacts with PCM1; TTLL1, TPGS1, TPGS2 and LRRC49.

The protein resides in the cytoplasm. It is found in the cytoskeleton. Its subcellular location is the microtubule organizing center. It localises to the centrosome. The protein localises to the centriolar satellite. Subunit of the tubulin polyglutamylase complex (TPGC). The complex mediates cilia and flagella polyglutamylation which is essential for their biogenesis and motility. In Homo sapiens (Human), this protein is Leucine-rich repeat-containing protein 49.